The primary structure comprises 209 residues: Potassium-transporting ATPase KdpC subunit (209 aa).

Residues 10–30 (VISLVFLFVLGFLFPTVTSLI) traverse the membrane as a helical segment.

Belongs to the KdpC family. As to quaternary structure, the system is composed of three essential subunits: KdpA, KdpB and KdpC.

The protein localises to the cell membrane. Part of the high-affinity ATP-driven potassium transport (or Kdp) system, which catalyzes the hydrolysis of ATP coupled with the electrogenic transport of potassium into the cytoplasm. This subunit acts as a catalytic chaperone that increases the ATP-binding affinity of the ATP-hydrolyzing subunit KdpB by the formation of a transient KdpB/KdpC/ATP ternary complex. This chain is Potassium-transporting ATPase KdpC subunit, found in Thermoplasma volcanium (strain ATCC 51530 / DSM 4299 / JCM 9571 / NBRC 15438 / GSS1).